Consider the following 908-residue polypeptide: Flap endonuclease GEN homolog 1 (908 aa).

The interval 2-96 is XPG-N domain; the sequence is GVNDLWQILE…SKRTQTRYGP (95 aa). Mg(2+) contacts are provided by Asp30, Glu75, Glu134, Glu136, Asp155, Asp157, and Asp208. The tract at residues 122-208 is XPG-I domain; the sequence is ECLGMPWVQA…VGLAVLLGCD (87 aa). Positions 208-383 are 5'-3' exonuclease domain; that stretch reads DYLPKGVPGV…LLVLLTRYDM (176 aa). A chromodomain region spans residues 389–463; the sequence is GRKTSNQLQP…VYQKQLSETK (75 aa). Disordered regions lie at residues 460-482, 629-650, 792-834, and 853-886; these read SETK…LPEA, YESE…QSNP, RDSS…NKLR, and AEDE…SWEN. Over residues 465–476 the composition is skewed to basic residues; that stretch reads RKQKSMKNKPKG. Phosphoserine occurs at positions 794 and 795. The segment covering 824 to 834 has biased composition (basic and acidic residues); that stretch reads HVRDSTHNKLR.

It belongs to the XPG/RAD2 endonuclease family. GEN subfamily. In terms of assembly, largely monomeric, dimerizes on the Holliday junction and the first nick occurs upon dimerization at the junction. It depends on Mg(2+) as a cofactor. As to expression, expressed in bone marrow and testis and to a lesser extent in thymus, spleen, brain and colon.

Its subcellular location is the nucleus. Endonuclease which resolves Holliday junctions (HJs) by the introduction of symmetrically related cuts across the junction point, to produce nicked duplex products in which the nicks can be readily ligated. Four-way DNA intermediates, also known as Holliday junctions, are formed during homologous recombination and DNA repair, and their resolution is necessary for proper chromosome segregation. Cleaves HJs by a nick and counter-nick mechanism involving dual coordinated incisions that lead to the formation of ligatable nicked duplex products. Cleavage of the first strand is rate limiting, while second strand cleavage is rapid. Largely monomeric, dimerizes on the HJ and the first nick occurs upon dimerization at the junction. Efficiently cleaves both single and double HJs contained within large recombination intermediates. Exhibits a weak sequence preference for incision between two G residues that reside in a T-rich region of DNA. Also has endonuclease activity on 5'-flap and replication fork (RF) DNA substrates. The polypeptide is Flap endonuclease GEN homolog 1 (Gen1) (Mus musculus (Mouse)).